The chain runs to 345 residues: MITEAIQKVVAGINLSEAEAMETMQEVMEGKATQAQIASLLTALHLKGETVPEITGFARTMRTKVIRVQTKRRNLVDTCGTGGDGANTFNISTACAFVLAGAGLPVAKHGNRSVSSKCGSADVLEQLGVFVQLTPEEAGLCLDQVGIAFLFAPLLHGAMKYAAAPRKEIGIRTVFNILGPLTNPAFAENQVLGVYSSDLAPVLAQVLANLGTKRSFVIHGCGGLDEISLAGEALVYEVKDNQVKEMIIDPMDYGLDRAPISALAGGDAKRNARMIKNILSGAPGPQRDTIIINAALGLIAGGLVRDLAMGIRLAEQIIDEGYALKKLNLLVEFSQTLVGRRSAAL.

5-phospho-alpha-D-ribose 1-diphosphate-binding positions include Gly80, 83–84 (GD), Thr88, 90–93 (NIST), 108–116 (KHGNRSVSS), and Ser120. Gly80 is a binding site for anthranilate. Ser92 provides a ligand contact to Mg(2+). Asn111 contributes to the anthranilate binding site. Position 166 (Arg166) interacts with anthranilate. Mg(2+)-binding residues include Asp225 and Glu226.

This sequence belongs to the anthranilate phosphoribosyltransferase family. Homodimer. The cofactor is Mg(2+).

The catalysed reaction is N-(5-phospho-beta-D-ribosyl)anthranilate + diphosphate = 5-phospho-alpha-D-ribose 1-diphosphate + anthranilate. It participates in amino-acid biosynthesis; L-tryptophan biosynthesis; L-tryptophan from chorismate: step 2/5. Functionally, catalyzes the transfer of the phosphoribosyl group of 5-phosphorylribose-1-pyrophosphate (PRPP) to anthranilate to yield N-(5'-phosphoribosyl)-anthranilate (PRA). The polypeptide is Anthranilate phosphoribosyltransferase (Desulforamulus reducens (strain ATCC BAA-1160 / DSM 100696 / MI-1) (Desulfotomaculum reducens)).